Consider the following 297-residue polypeptide: tRNA dimethylallyltransferase (297 aa).

Residue 10–17 (GITASGKS) participates in ATP binding. 12–17 (TASGKS) lines the substrate pocket. The tract at residues 36 to 39 (DSKQ) is interaction with substrate tRNA.

The protein belongs to the IPP transferase family. Monomer. It depends on Mg(2+) as a cofactor.

The enzyme catalyses adenosine(37) in tRNA + dimethylallyl diphosphate = N(6)-dimethylallyladenosine(37) in tRNA + diphosphate. Catalyzes the transfer of a dimethylallyl group onto the adenine at position 37 in tRNAs that read codons beginning with uridine, leading to the formation of N6-(dimethylallyl)adenosine (i(6)A). The polypeptide is tRNA dimethylallyltransferase (Wolbachia pipientis wMel).